We begin with the raw amino-acid sequence, 206 residues long: dTTP/UTP pyrophosphatase (206 aa).

The Proton acceptor role is filled by aspartate 79.

The protein belongs to the Maf family. YhdE subfamily. The cofactor is a divalent metal cation.

The protein localises to the cytoplasm. The enzyme catalyses dTTP + H2O = dTMP + diphosphate + H(+). The catalysed reaction is UTP + H2O = UMP + diphosphate + H(+). Nucleoside triphosphate pyrophosphatase that hydrolyzes dTTP and UTP. May have a dual role in cell division arrest and in preventing the incorporation of modified nucleotides into cellular nucleic acids. This chain is dTTP/UTP pyrophosphatase, found in Rhizobium johnstonii (strain DSM 114642 / LMG 32736 / 3841) (Rhizobium leguminosarum bv. viciae).